The sequence spans 95 residues: Co-chaperonin GroES (95 aa).

Belongs to the GroES chaperonin family. In terms of assembly, heptamer of 7 subunits arranged in a ring. Interacts with the chaperonin GroEL.

The protein localises to the cytoplasm. Together with the chaperonin GroEL, plays an essential role in assisting protein folding. The GroEL-GroES system forms a nano-cage that allows encapsulation of the non-native substrate proteins and provides a physical environment optimized to promote and accelerate protein folding. GroES binds to the apical surface of the GroEL ring, thereby capping the opening of the GroEL channel. The chain is Co-chaperonin GroES from Pelobacter propionicus (strain DSM 2379 / NBRC 103807 / OttBd1).